The following is a 31-amino-acid chain: Superoxide dismutase [Cu-Zn] (31 aa).

Belongs to the Cu-Zn superoxide dismutase family. Cu cation is required as a cofactor. Zn(2+) serves as cofactor.

It is found in the cytoplasm. It carries out the reaction 2 superoxide + 2 H(+) = H2O2 + O2. Functionally, destroys radicals which are normally produced within the cells and which are toxic to biological systems. In Striga hermonthica (Purple witchweed), this protein is Superoxide dismutase [Cu-Zn].